Here is a 115-residue protein sequence, read N- to C-terminus: Toxin-like structure LSTX-R1 (115 aa).

The signal sequence occupies residues 1–18 (MKLSLIIIATSLVIAVVA). Residues 19 to 51 (FPSKDSAATDFDKTESLENVEERVETALDERPR) constitute a propeptide that is removed on maturation.

It belongs to the neurotoxin 25 family. F7 subfamily. In terms of processing, contains 4 disulfide bonds. As to expression, expressed by the venom gland.

Its subcellular location is the secreted. This is Toxin-like structure LSTX-R1 from Lycosa singoriensis (Wolf spider).